A 62-amino-acid chain; its full sequence is Venom peptide 6 (62 aa).

An N-terminal signal peptide occupies residues 1–26 (MKSTSVFILFAGIAIMACLQMTGTEA). AXPX repeat units follow at residues 26–29 (AAPS), 30–33 (ASPN), and 40–43 (ADPD). Positions 27–46 (APSASPNPTPVARADPDPEA) are excised as a propeptide.

It belongs to the MCD family. Expressed by the venom gland.

It localises to the secreted. It is found in the target cell membrane. Antimicrobial peptide with strong activity against the fungus B.cinerea (MIC=5 uM) and the Gram-positive bacterium S.aureus (MIC=50 uM), and no activity against C.albicans (MIC&gt;200 uM), and the Gram-negative bacterium E.coli (MIC&gt;200 uM). Shows cytolytic activity against insect cell lines. Has no hemolytic activity against human erythrocytes. In vivo, peptide injection in the vicinity of the head and thorax of lepidopteran larvae induces feeding disorder that lasts one or two days before recovering. The polypeptide is Venom peptide 6 (Eumenes pomiformis (Potter wasp)).